A 901-amino-acid polypeptide reads, in one-letter code: Flowering time control protein FPA (901 aa).

3 consecutive RRM domains span residues N18–P90, K95–S166, and K206–D281. The interval V343–V416 is disordered. Residues W441–P537 enclose the SPOC domain. Residues S655–Y736 are disordered. 2 stretches are compositionally biased toward polar residues: residues Q664–L682 and H700–P716.

This sequence belongs to the RRM Spen family. As to expression, expressed in roots, leaves, stems and flowers. Highest expression in flower stems and meristematic regions.

It localises to the nucleus. Functionally, plays a role in the regulation of flowering time in the autonomous flowering pathway by decreasing FLOWERING LOCUS C mRNA levels. Required for RNA-mediated chromatin silencing of a range of loci in the genome. Cotranscriptionally recognizes aberrant RNA and marks it for silencing. Controls alternative cleavage and polyadenylation on pre-mRNAs and antisense RNAs. Acts redundantly with FCA to prevent the expression of distally polyadenylated antisense RNAs at the FLC locus. This is Flowering time control protein FPA (FPA) from Arabidopsis thaliana (Mouse-ear cress).